The chain runs to 125 residues: Small ribosomal subunit protein uS12 (125 aa).

A 3-methylthioaspartic acid modification is found at Asp-89. A disordered region spans residues 104–125; it reads TAGVKDRSQSRSKYGAKASKQD.

It belongs to the universal ribosomal protein uS12 family. Part of the 30S ribosomal subunit. Contacts proteins S8 and S17. May interact with IF1 in the 30S initiation complex.

In terms of biological role, with S4 and S5 plays an important role in translational accuracy. Its function is as follows. Interacts with and stabilizes bases of the 16S rRNA that are involved in tRNA selection in the A site and with the mRNA backbone. Located at the interface of the 30S and 50S subunits, it traverses the body of the 30S subunit contacting proteins on the other side and probably holding the rRNA structure together. The combined cluster of proteins S8, S12 and S17 appears to hold together the shoulder and platform of the 30S subunit. The polypeptide is Small ribosomal subunit protein uS12 (Prochlorococcus marinus (strain MIT 9303)).